The following is a 237-amino-acid chain: Probable S-methyl-5'-thioinosine phosphorylase (237 aa).

Phosphate is bound by residues T12 and 54–55 (RH). A substrate-binding site is contributed by M187. Phosphate is bound at residue T188. 211 to 213 (NWA) is a binding site for substrate.

The protein belongs to the PNP/MTAP phosphorylase family. MTAP subfamily. In terms of assembly, homotrimer.

The enzyme catalyses S-methyl-5'-thioinosine + phosphate = 5-(methylsulfanyl)-alpha-D-ribose 1-phosphate + hypoxanthine. The protein operates within purine metabolism; purine nucleoside salvage. Catalyzes the reversible phosphorylation of S-methyl-5'-thioinosine (MTI) to hypoxanthine and 5-methylthioribose-1-phosphate. Involved in the breakdown of S-methyl-5'-thioadenosine (MTA), a major by-product of polyamine biosynthesis. Catabolism of (MTA) occurs via deamination to MTI and phosphorolysis to hypoxanthine. This chain is Probable S-methyl-5'-thioinosine phosphorylase, found in Xylella fastidiosa (strain 9a5c).